Consider the following 507-residue polypeptide: Glucose-6-phosphate isomerase (507 aa).

Glu-337 acts as the Proton donor in catalysis. Residues His-368 and Lys-478 contribute to the active site.

Belongs to the GPI family.

Its subcellular location is the cytoplasm. The catalysed reaction is alpha-D-glucose 6-phosphate = beta-D-fructose 6-phosphate. It functions in the pathway carbohydrate biosynthesis; gluconeogenesis. It participates in carbohydrate degradation; glycolysis; D-glyceraldehyde 3-phosphate and glycerone phosphate from D-glucose: step 2/4. Functionally, catalyzes the reversible isomerization of glucose-6-phosphate to fructose-6-phosphate. The polypeptide is Glucose-6-phosphate isomerase (Novosphingobium aromaticivorans (strain ATCC 700278 / DSM 12444 / CCUG 56034 / CIP 105152 / NBRC 16084 / F199)).